The sequence spans 65 residues: Large ribosomal subunit protein bL35 (65 aa).

Belongs to the bacterial ribosomal protein bL35 family.

This chain is Large ribosomal subunit protein bL35, found in Chromobacterium violaceum (strain ATCC 12472 / DSM 30191 / JCM 1249 / CCUG 213 / NBRC 12614 / NCIMB 9131 / NCTC 9757 / MK).